The chain runs to 655 residues: Probable glucan endo-1,3-beta-glucosidase btgC (655 aa).

2 disordered regions span residues 1 to 61 (MSGD…ATPG) and 89 to 114 (SGVD…PGSD). Topologically, residues 1–282 (MSGDPRSFSF…PKPGTGSRKR (282 aa)) are cytoplasmic. Polar residues predominate over residues 19–33 (DSSQQPLHPTNTMAD). Residues 89-98 (SGVDAFRDTD) are compositionally biased toward basic and acidic residues. The chain crosses the membrane as a helical; Signal-anchor for type II membrane protein span at residues 283–303 (GWIVGIILAVVIVGAIVGGAV). The Extracellular segment spans residues 304–655 (GGTLGNREKE…IPDCGGKTAT (352 aa)). The interval 305-338 (GTLGNREKESPSSSETASGDEKVNGDLGKDSDEI) is disordered. Residues 323–338 (GDEKVNGDLGKDSDEI) show a composition bias toward basic and acidic residues. Residue asparagine 426 is glycosylated (N-linked (GlcNAc...) asparagine). The active-site Proton donor is the glutamate 458. Residue glutamate 557 is the Nucleophile of the active site. Residues asparagine 576 and asparagine 602 are each glycosylated (N-linked (GlcNAc...) asparagine).

It belongs to the glycosyl hydrolase 17 family.

It localises to the cell membrane. It catalyses the reaction Hydrolysis of (1-&gt;3)-beta-D-glucosidic linkages in (1-&gt;3)-beta-D-glucans.. Functionally, glucanases play a role in cell expansion during growth, in cell-cell fusion during mating, and in spore release during sporulation. This enzyme may be involved in beta-glucan degradation. Active on laminarin and lichenan. The polypeptide is Probable glucan endo-1,3-beta-glucosidase btgC (btgC) (Aspergillus terreus (strain NIH 2624 / FGSC A1156)).